We begin with the raw amino-acid sequence, 352 residues long: S-adenosylmethionine:tRNA ribosyltransferase-isomerase (352 aa).

It belongs to the QueA family. In terms of assembly, monomer.

The protein resides in the cytoplasm. The catalysed reaction is 7-aminomethyl-7-carbaguanosine(34) in tRNA + S-adenosyl-L-methionine = epoxyqueuosine(34) in tRNA + adenine + L-methionine + 2 H(+). The protein operates within tRNA modification; tRNA-queuosine biosynthesis. Transfers and isomerizes the ribose moiety from AdoMet to the 7-aminomethyl group of 7-deazaguanine (preQ1-tRNA) to give epoxyqueuosine (oQ-tRNA). The protein is S-adenosylmethionine:tRNA ribosyltransferase-isomerase of Syntrophomonas wolfei subsp. wolfei (strain DSM 2245B / Goettingen).